The primary structure comprises 91 residues: UPF0512 protein M (91 aa).

It belongs to the UPF0512 family.

This is UPF0512 protein M from Dictyostelium discoideum (Social amoeba).